Reading from the N-terminus, the 193-residue chain is Coiled-coil domain-containing protein 184 (193 aa).

A coiled-coil region spans residues 39 to 68; sequence GMKELMEHLKAQLQALFEDVRAMRGALDEQ. A disordered region spans residues 101 to 176; the sequence is GLGVAGGKGS…LGENGPLVEP (76 aa). Positions 135-146 are enriched in acidic residues; the sequence is PDEEDEEEEEEK.

The chain is Coiled-coil domain-containing protein 184 (Ccdc184) from Rattus norvegicus (Rat).